Here is an 82-residue protein sequence, read N- to C-terminus: Consomatin Ro2 (82 aa).

The signal sequence occupies residues 1-22; that stretch reads MQTAYWLMVMMMVWITAPLYEG. A propeptide spanning residues 23-57 is cleaved from the precursor; it reads GKPNDVIRGLVPDDLTPQFILRSLISRRRSDKDVR. Cysteine 62 and cysteine 68 are disulfide-bonded. Tryptophan 64 bears the D-tryptophan mark. Proline 69 and proline 70 each carry 4-hydroxyproline. Residues 72–82 constitute a propeptide that is removed on maturation; the sequence is LWRRHDRKGKD.

This sequence belongs to the conotoxin C superfamily. Consomatin family. As to expression, expressed by the venom duct.

The protein resides in the secreted. Moderately activates human somatostatin receptors (SSTR) with a preferential activation of SSTR1 and SSTR4. In vivo, does not cause behavioral changes in mice within a few minutes of intracranial injection, but causes a progressive loss of movement thereafter. Four to five hours after injection, mice recover, even with the highest dose tested. Shows antinociception and antihyperalgesia activities in two mouse models of acute pain, most probably by acting outside the central nervous system. In Conus rolani (Cone snail), this protein is Consomatin Ro2.